The chain runs to 369 residues: 3-dehydroquinate synthase (369 aa).

NAD(+)-binding positions include 70–75 (DAEDGK), 104–108 (GAATD), 128–129 (TT), lysine 141, lysine 150, and 168–171 (TLET). 3 residues coordinate Zn(2+): glutamate 183, histidine 246, and histidine 262.

Belongs to the sugar phosphate cyclases superfamily. Dehydroquinate synthase family. Co(2+) is required as a cofactor. It depends on Zn(2+) as a cofactor. NAD(+) serves as cofactor.

Its subcellular location is the cytoplasm. The catalysed reaction is 7-phospho-2-dehydro-3-deoxy-D-arabino-heptonate = 3-dehydroquinate + phosphate. It functions in the pathway metabolic intermediate biosynthesis; chorismate biosynthesis; chorismate from D-erythrose 4-phosphate and phosphoenolpyruvate: step 2/7. Functionally, catalyzes the conversion of 3-deoxy-D-arabino-heptulosonate 7-phosphate (DAHP) to dehydroquinate (DHQ). This is 3-dehydroquinate synthase from Rhodococcus erythropolis (strain PR4 / NBRC 100887).